We begin with the raw amino-acid sequence, 141 residues long: Nucleoside diphosphate kinase (141 aa).

Positions 11, 59, 87, 93, 104, and 114 each coordinate ATP. H117 acts as the Pros-phosphohistidine intermediate in catalysis.

Belongs to the NDK family. In terms of assembly, homotetramer. Requires Mg(2+) as cofactor.

Its subcellular location is the cytoplasm. It carries out the reaction a 2'-deoxyribonucleoside 5'-diphosphate + ATP = a 2'-deoxyribonucleoside 5'-triphosphate + ADP. It catalyses the reaction a ribonucleoside 5'-diphosphate + ATP = a ribonucleoside 5'-triphosphate + ADP. Functionally, major role in the synthesis of nucleoside triphosphates other than ATP. The ATP gamma phosphate is transferred to the NDP beta phosphate via a ping-pong mechanism, using a phosphorylated active-site intermediate. This is Nucleoside diphosphate kinase from Paraburkholderia xenovorans (strain LB400).